A 141-amino-acid polypeptide reads, in one-letter code: Large ribosomal subunit protein uL11 (141 aa).

The protein belongs to the universal ribosomal protein uL11 family. In terms of assembly, part of the ribosomal stalk of the 50S ribosomal subunit. Interacts with L10 and the large rRNA to form the base of the stalk. L10 forms an elongated spine to which L12 dimers bind in a sequential fashion forming a multimeric L10(L12)X complex. Post-translationally, one or more lysine residues are methylated.

Forms part of the ribosomal stalk which helps the ribosome interact with GTP-bound translation factors. This is Large ribosomal subunit protein uL11 from Carboxydothermus hydrogenoformans (strain ATCC BAA-161 / DSM 6008 / Z-2901).